Reading from the N-terminus, the 162-residue chain is Large ribosomal subunit protein uL10 (162 aa).

Belongs to the universal ribosomal protein uL10 family. As to quaternary structure, part of the ribosomal stalk of the 50S ribosomal subunit. The N-terminus interacts with L11 and the large rRNA to form the base of the stalk. The C-terminus forms an elongated spine to which L12 dimers bind in a sequential fashion forming a multimeric L10(L12)X complex.

In terms of biological role, forms part of the ribosomal stalk, playing a central role in the interaction of the ribosome with GTP-bound translation factors. This chain is Large ribosomal subunit protein uL10, found in Borrelia recurrentis (strain A1).